The chain runs to 2314 residues: Protein Ycf2 (2314 aa).

Residue 1653–1660 (GSIGTGRS) coordinates ATP.

The protein belongs to the Ycf2 family.

It localises to the plastid. The protein localises to the chloroplast stroma. Probable ATPase of unknown function. Its presence in a non-photosynthetic plant (Epifagus virginiana) and experiments in tobacco indicate that it has an essential function which is probably not related to photosynthesis. In Piper cenocladum (Ant piper), this protein is Protein Ycf2.